Consider the following 363-residue polypeptide: Serine/threonine-protein kinase SRK2A (363 aa).

In terms of domain architecture, Protein kinase spans 4-260 (YELVKDIGAG…IAEIKKHSWF (257 aa)). ATP is bound by residues 10 to 18 (IGAGNFGVA) and lysine 33. The active-site Proton acceptor is aspartate 123. Positions 306-363 (SRSIGGFGWGGNGDADGKEEDAEDVEEEEEEVEEEEDDEDEYDKTVKEVHASGEVRIS) are disordered. Positions 310–319 (GGFGWGGNGD) are enriched in gly residues. Over residues 322-347 (GKEEDAEDVEEEEEEVEEEEDDEDEY) the composition is skewed to acidic residues. Residues 348 to 363 (DKTVKEVHASGEVRIS) show a composition bias toward basic and acidic residues.

It belongs to the protein kinase superfamily. Ser/Thr protein kinase family. Interacts with TOPP1. As to expression, expressed in seedlings.

The catalysed reaction is L-seryl-[protein] + ATP = O-phospho-L-seryl-[protein] + ADP + H(+). It catalyses the reaction L-threonyl-[protein] + ATP = O-phospho-L-threonyl-[protein] + ADP + H(+). This Arabidopsis thaliana (Mouse-ear cress) protein is Serine/threonine-protein kinase SRK2A (SRK2A).